The following is a 735-amino-acid chain: Muskelin (735 aa).

Ala2 is subject to N-acetylalanine. In terms of domain architecture, LisH spans Arg172 to Leu204. A CTLH domain is found at His206–Ser258. Kelch repeat units lie at residues Thr284 to Lys330, Gln339 to Gln391, Ile408 to Gly458, Cys469 to Thr515, Glu526 to Glu578, and Val597 to Asp651.

In terms of assembly, homodimer; may form higher oligomers. Identified in the CTLH complex that contains GID4, RANBP9 and/or RANBP10, MKLN1, MAEA, RMND5A (or alternatively its paralog RMND5B), GID8, ARMC8, WDR26 and YPEL5. Within this complex, MAEA, RMND5A (or alternatively its paralog RMND5B), GID8, WDR26, and RANBP9 and/or RANBP10 form the catalytic core, while GID4, MKLN1, ARMC8 and YPEL5 have ancillary roles. Interacts with RANBP9. Part of a complex consisting of RANBP9, MKLN1 and GID8. Interacts with GABRA1. Interacts with the C-terminal tail of PTGER3.

The protein resides in the cytoplasm. It localises to the cytosol. It is found in the nucleus. Its subcellular location is the nucleoplasm. The protein localises to the cell projection. The protein resides in the ruffle. It localises to the cell cortex. It is found in the synapse. Its subcellular location is the postsynapse. Functionally, component of the CTLH E3 ubiquitin-protein ligase complex that selectively accepts ubiquitin from UBE2H and mediates ubiquitination and subsequent proteasomal degradation of the transcription factor HBP1. Required for internalization of the GABA receptor GABRA1 from the cell membrane via endosomes and subsequent GABRA1 degradation. Acts as a mediator of cell spreading and cytoskeletal responses to the extracellular matrix component THBS1. This is Muskelin (MKLN1) from Pongo abelii (Sumatran orangutan).